Reading from the N-terminus, the 246-residue chain is Zinc import ATP-binding protein ZnuC (246 aa).

Positions 24-244 constitute an ABC transporter domain; sequence LKIENLALAY…TLGEIFSSYI (221 aa). An ATP-binding site is contributed by 56–63; it reads GPNGGGKT.

It belongs to the ABC transporter superfamily. Zinc importer (TC 3.A.1.15.5) family. In terms of assembly, the complex is composed of two ATP-binding proteins (ZnuC), two transmembrane proteins (ZnuB) and a solute-binding protein (ZnuA).

The protein localises to the cell membrane. It carries out the reaction Zn(2+)(out) + ATP(in) + H2O(in) = Zn(2+)(in) + ADP(in) + phosphate(in) + H(+)(in). Part of the ABC transporter complex ZnuABC involved in zinc import. Responsible for energy coupling to the transport system. This Wolbachia sp. subsp. Brugia malayi (strain TRS) protein is Zinc import ATP-binding protein ZnuC.